The primary structure comprises 368 residues: sn-1 linoleoyl-lipid 6-desaturase (368 aa).

Helical transmembrane passes span 47–67 (IILA…DVLW) and 68–88 (MKLL…FNIS). The Histidine box-1 signature appears at 89–93 (HDGNH). Residues 124–129 (HNVLHH) carry the Histidine box-2 motif. The next 3 membrane-spanning stretches (helical) occupy residues 164–184 (WFIW…DVQT), 204–224 (IATL…IPIA), and 233–253 (VIGA…VFML). A Histidine box-3 motif is present at residues 305 to 309 (HHLFP).

The protein belongs to the fatty acid desaturase type 2 family. Fe(2+) serves as cofactor.

The protein resides in the cell inner membrane. It localises to the cellular thylakoid membrane. It carries out the reaction a 1-[(9Z,12Z)-octadecdienoyl]-2-acyl-glycerolipid + 2 reduced [2Fe-2S]-[ferredoxin] + O2 + 2 H(+) = a 1-[(6Z,9Z,12Z)-octadectrienoyl]-2-acyl-glycerolipid + 2 oxidized [2Fe-2S]-[ferredoxin] + 2 H2O. It participates in lipid metabolism; polyunsaturated fatty acid biosynthesis. Activity requires ferredoxin, which is the natural electron donor, or cytochrome b5. In addition, activity is increased in the presence of the intermediate electron donors, NADPH and FADH(2). Desaturase involved in fatty acid biosynthesis. Introduces a double bond at carbon 6 of linoleoyl group (18:2) attached to the sn-1 position of the glycerol moiety of membrane glycerolipids, leading to the formation of gamma-linolenic acid (GLA). The sequence is that of sn-1 linoleoyl-lipid 6-desaturase from Arthrospira platensis (Spirulina platensis).